A 1155-amino-acid polypeptide reads, in one-letter code: Protein BREAST CANCER SUSCEPTIBILITY 2 homolog B (1155 aa).

4 BRCA2 repeats span residues 63–97, 116–150, 163–197, and 257–291; these read MPGEIPMFRTGLGKSVVLKESSIAKAKSILAENVA, TAETMPMFRTALGKTVPLKESSIAKPLSILGSDMI, FGVPNSLFQTASNKKVNVSSAGLARAKALLGLEED, and LKVPPTKFQTAGGKSLSVSAEALKRARNLLGDPEL.

As to quaternary structure, interacts with RAD51 and DMC1. Interacts with DSS1(I) and DSS1(V). Can interact with both RAD51 and DSS1(I) or both DMC1 and DSS1(I) in a tripartite complex. Expressed in flower buds.

Functionally, involved in double-strand break repair and/or homologous recombination by mediating RAD51- and DMC1-facilitated DNA repair. Plays an essential role in both somatic and meiotic homologous recombination. Is crucial for the formation of RAD51 and DMC1 foci during male meiotic homologous recombination in prophase I. This chain is Protein BREAST CANCER SUSCEPTIBILITY 2 homolog B, found in Arabidopsis thaliana (Mouse-ear cress).